Here is a 361-residue protein sequence, read N- to C-terminus: Histidinol-phosphate aminotransferase (361 aa).

Lysine 224 carries the post-translational modification N6-(pyridoxal phosphate)lysine.

It belongs to the class-II pyridoxal-phosphate-dependent aminotransferase family. Histidinol-phosphate aminotransferase subfamily. In terms of assembly, homodimer. Requires pyridoxal 5'-phosphate as cofactor.

It carries out the reaction L-histidinol phosphate + 2-oxoglutarate = 3-(imidazol-4-yl)-2-oxopropyl phosphate + L-glutamate. Its pathway is amino-acid biosynthesis; L-histidine biosynthesis; L-histidine from 5-phospho-alpha-D-ribose 1-diphosphate: step 7/9. In Limosilactobacillus fermentum (strain NBRC 3956 / LMG 18251) (Lactobacillus fermentum), this protein is Histidinol-phosphate aminotransferase.